Here is a 351-residue protein sequence, read N- to C-terminus: MRKIIHVDMDCFFAAVEMRDNPALRDIPLAIGGSRERRGVISTANYPARKYGVRSAMPTAMALKLCPHLTLLPGRFDAYKEASAHIREIFSRYTSLIEPLSLDEAYLDVTHSPHCYGSATLMAKEIRQTIFDELQLTASAGIAPIKFLAKIASDLNKPNGQYVITPEEVPGFLRTLPLGKIPGVGKVTAAKLESLGLRTCEDVQKSDLAALLKRFGKFGRVLWERSQGIDDREISSDRQRKSVGVERTLAEDIHEWAECEAIVELLYPELERRLAAVQPDLRIARQGVKLKFNDFQLTTQEHVWPKLNKEDLLATARKTWEERRSGRGVRLVGLHVTLLDPQIERQLVLGL.

Positions 4 to 185 constitute a UmuC domain; the sequence is IIHVDMDCFF…LPLGKIPGVG (182 aa). The Mg(2+) site is built by aspartate 8 and aspartate 103. Residue glutamate 104 is part of the active site.

It belongs to the DNA polymerase type-Y family. In terms of assembly, monomer. Requires Mg(2+) as cofactor.

The protein resides in the cytoplasm. The catalysed reaction is DNA(n) + a 2'-deoxyribonucleoside 5'-triphosphate = DNA(n+1) + diphosphate. Functionally, poorly processive, error-prone DNA polymerase involved in untargeted mutagenesis. Copies undamaged DNA at stalled replication forks, which arise in vivo from mismatched or misaligned primer ends. These misaligned primers can be extended by PolIV. Exhibits no 3'-5' exonuclease (proofreading) activity. May be involved in translesional synthesis, in conjunction with the beta clamp from PolIII. This is DNA polymerase IV from Cronobacter sakazakii (strain ATCC BAA-894) (Enterobacter sakazakii).